The sequence spans 313 residues: Porphobilinogen deaminase (313 aa).

S-(dipyrrolylmethanemethyl)cysteine is present on C242.

The protein belongs to the HMBS family. As to quaternary structure, monomer. It depends on dipyrromethane as a cofactor.

It catalyses the reaction 4 porphobilinogen + H2O = hydroxymethylbilane + 4 NH4(+). It participates in porphyrin-containing compound metabolism; protoporphyrin-IX biosynthesis; coproporphyrinogen-III from 5-aminolevulinate: step 2/4. In terms of biological role, tetrapolymerization of the monopyrrole PBG into the hydroxymethylbilane pre-uroporphyrinogen in several discrete steps. The polypeptide is Porphobilinogen deaminase (Marinobacter nauticus (strain ATCC 700491 / DSM 11845 / VT8) (Marinobacter aquaeolei)).